We begin with the raw amino-acid sequence, 162 residues long: Phosphopantetheine adenylyltransferase (162 aa).

A substrate-binding site is contributed by threonine 9. ATP-binding positions include 9–10 and histidine 17; that span reads TF. Positions 41, 77, and 91 each coordinate substrate. ATP-binding positions include 92 to 94, glutamate 102, and 127 to 133; these read GLR and RQAIASK.

Belongs to the bacterial CoaD family. Homohexamer. Mg(2+) serves as cofactor.

It is found in the cytoplasm. It catalyses the reaction (R)-4'-phosphopantetheine + ATP + H(+) = 3'-dephospho-CoA + diphosphate. Its pathway is cofactor biosynthesis; coenzyme A biosynthesis; CoA from (R)-pantothenate: step 4/5. Reversibly transfers an adenylyl group from ATP to 4'-phosphopantetheine, yielding dephospho-CoA (dPCoA) and pyrophosphate. The chain is Phosphopantetheine adenylyltransferase from Cereibacter sphaeroides (strain ATCC 17025 / ATH 2.4.3) (Rhodobacter sphaeroides).